Here is a 218-residue protein sequence, read N- to C-terminus: Akirin (218 aa).

The tract at residues 96–150 (KAIPRSNDFDDDGDQRGDGCSSNYSKAYRAPSSPKSGSDSEGEAPSTSVTDRSSA) is disordered. A compositionally biased stretch (polar residues) spans 128–147 (SPKSGSDSEGEAPSTSVTDR).

This sequence belongs to the akirin family. In terms of assembly, interacts with hda-1, a component of the NuRD complex. Interacts with let-418, a component of the NuRD and MEC complexes. Interacts with the transcription factor ceh-18. Interacts with ima-2. In terms of tissue distribution, localizes to somatic tissues throughout the body, including muscle cells. Expressed in lateral epithelial seam cells, the hyp7 epidermal syncytium, and multiple head and tail neurons.

It localises to the nucleus. Its function is as follows. Molecular adapter that acts as a bridge between a variety of multiprotein complexes, and which is involved in antifungal innate immunity, development of the muscle and sister chromatid cohesion. Plays a role in antifungal innate immunity by acting as a bridge between components of the NuRD (Nucleosome Remodeling and Deacetylase) and MEC chromatin remodeling complexes. NuRD and MEC complexes bind to the promoters of antimicrobial peptide genes and may recruit other proteins such as ceh-18 to control gene expression in response to fungal infection. During meiotic prophase I, plays a role in the disassembly of synaptonemal complex proteins and in the regulation of chromosome condensation and segregation. Together with nuclear import receptor ima-2, required for the import and load of cohesin complex proteins in meiotic nuclei, possibly by acting as a bridge between ima-2 and cohesins. Required for embryonic development of muscle tissue. The sequence is that of Akirin from Caenorhabditis elegans.